The chain runs to 557 residues: Urocanate hydratase (557 aa).

NAD(+)-binding positions include 53 to 54, Gln131, 177 to 179, 197 to 202, 243 to 244, 264 to 268, 274 to 275, and 323 to 324; these read GG, GMG, ECQQSR, NA, QTSAH, YL, and YG. Cys411 is an active-site residue. NAD(+)-binding positions include 455–456 and Gly493; that span reads RE.

In terms of assembly, homodimer. It depends on NAD(+) as a cofactor.

Its subcellular location is the cytoplasm. It catalyses the reaction 4-imidazolone-5-propanoate = trans-urocanate + H2O. The protein operates within amino-acid degradation; L-histidine degradation into L-glutamate; N-formimidoyl-L-glutamate from L-histidine: step 2/3. Functionally, catalyzes the conversion of urocanate to 4-imidazolone-5-propionate. In Pseudomonas putida (Arthrobacter siderocapsulatus), this protein is Urocanate hydratase.